The primary structure comprises 95 residues: Non-specific lipid-transfer protein (95 aa).

3 disulfides stabilise this stretch: Cys-4-Cys-52, Cys-14-Cys-29, and Cys-50-Cys-90.

The protein belongs to the plant LTP family. As to expression, seeds.

Its function is as follows. Plant non-specific lipid-transfer proteins transfer phospholipids as well as galactolipids across membranes. May play a role in wax or cutin deposition in the cell walls of expanding epidermal cells and certain secretory tissues. The polypeptide is Non-specific lipid-transfer protein (Eleusine coracana (Indian finger millet)).